The sequence spans 185 residues: MNNETIAKAKRNMNKSIEVYQSNLATVRAGVANASLLDRVMVEYYGVPTPLVQMAGITIPEPRVLMITPYDKTSLNDIEHAILASDLGLTPANDGNVIRLIIPQLTGERRQEIAKEVGKLAEEAKIAVRNVRQEAMKALKKQEKDGEITEDEERRLEKEVQKVTDESTKKIDQMADNKRKEIIQG.

The tract at residues 138-185 is disordered; it reads ALKKQEKDGEITEDEERRLEKEVQKVTDESTKKIDQMADNKRKEIIQG.

It belongs to the RRF family.

The protein localises to the cytoplasm. In terms of biological role, responsible for the release of ribosomes from messenger RNA at the termination of protein biosynthesis. May increase the efficiency of translation by recycling ribosomes from one round of translation to another. This chain is Ribosome-recycling factor, found in Lactobacillus delbrueckii subsp. bulgaricus (strain ATCC 11842 / DSM 20081 / BCRC 10696 / JCM 1002 / NBRC 13953 / NCIMB 11778 / NCTC 12712 / WDCM 00102 / Lb 14).